The chain runs to 493 residues: Amidophosphoribosyltransferase (493 aa).

Residues 1 to 26 (MIPTQPLTADLDCDLGLERPDRPEEA) constitute a propeptide that is removed on maturation. C27 (nucleophile) is an active-site residue. Residues 27-252 (CGVFALYAPG…PGEMVRITDA (226 aa)) enclose the Glutamine amidotransferase type-2 domain. C268 is a [4Fe-4S] cluster binding site. Residues S315, D377, and D378 each coordinate Mg(2+). Residues C414, C465, and C468 each contribute to the [4Fe-4S] cluster site.

This sequence in the C-terminal section; belongs to the purine/pyrimidine phosphoribosyltransferase family. Requires Mg(2+) as cofactor. [4Fe-4S] cluster serves as cofactor.

The catalysed reaction is 5-phospho-beta-D-ribosylamine + L-glutamate + diphosphate = 5-phospho-alpha-D-ribose 1-diphosphate + L-glutamine + H2O. Its pathway is purine metabolism; IMP biosynthesis via de novo pathway; N(1)-(5-phospho-D-ribosyl)glycinamide from 5-phospho-alpha-D-ribose 1-diphosphate: step 1/2. Catalyzes the formation of phosphoribosylamine from phosphoribosylpyrophosphate (PRPP) and glutamine. The polypeptide is Amidophosphoribosyltransferase (Synechococcus elongatus (strain ATCC 33912 / PCC 7942 / FACHB-805) (Anacystis nidulans R2)).